Consider the following 303-residue polypeptide: Cyclin-dependent kinase 4 (303 aa).

Alanine 2 carries the N-acetylalanine modification. In terms of domain architecture, Protein kinase spans 6–295 (YEPVAEIGVG…AFRALQHSYL (290 aa)). Residues 12–20 (IGVGAYGTV) and lysine 35 each bind ATP. The tract at residues 50-56 (PVSTVRE) is required for binding D-type cyclins. The Proton acceptor role is filled by aspartate 140. Residue threonine 172 is modified to Phosphothreonine; by CAK. Phosphoserine is present on serine 300.

Belongs to the protein kinase superfamily. CMGC Ser/Thr protein kinase family. CDC2/CDKX subfamily. As to quaternary structure, component of the D-CDK4 complex, composed of CDK4 and some D-type G1 cyclin (CCND1, CCND2 or CCND3). Interacts directly in the complex with CCND1, CCND2 or CCND3. Interacts with SEI1 and ZNF655. Forms a ternary complex, cyclin D-CDK4-CDKN1B, involved in modulating CDK4 enzymatic activity. Interacts directly with CDKN1B (phosphorylated on 'Tyr-88' and 'Tyr-89'); the interaction allows assembly of the cyclin D-CDK4 complex, Thr-172 phosphorylation, nuclear translocation and enhances the cyclin D-CDK4 complex activity. CDK4 activity is either inhibited or enhanced depending on stoichiometry of complex. The non-tyrosine-phosphorylated form of CDKN1B prevents T-loop phosphorylation of CDK4 producing inactive CDK4. Interacts (unphosphorylated form) with CDK2. Also forms ternary complexes with CDKN1A or CDKN2A. Interacts directly with CDKN1A (via its N-terminal); the interaction promotes the assembly of the cyclin D-CDK4 complex, its nuclear translocation and promotes the cyclin D-dependent enzyme activity of CDK4. Interacts with CCND1; the interaction is prevented with the binding of CCND1 to INSM1 during cell cycle progression. Probably forms a complex composed of chaperones HSP90 and HSP70, co-chaperones CDC37, PPP5C, TSC1 and client protein TSC2, CDK4, AKT, RAF1 and NR3C1; this complex does not contain co-chaperones STIP1/HOP and PTGES3/p23. Interacts with CEBPA (when phosphorylated). Interacts with FNIP1 and FNIP2. Expressed in fetal and adult lung. Also expressed in brain, heart, liver, skeletal muscle and testes.

The protein localises to the cytoplasm. It is found in the nucleus. It localises to the nucleus membrane. It carries out the reaction L-seryl-[protein] + ATP = O-phospho-L-seryl-[protein] + ADP + H(+). The catalysed reaction is L-threonyl-[protein] + ATP = O-phospho-L-threonyl-[protein] + ADP + H(+). Both phosphorylation at Thr-172 and binding of a D-type cyclin are necessary for enzymatic activity. Full activation of the cyclin-D-CDK4 complex appears to require other factors such as recruitment of the substrate via a substrate recruitment motif, and/or formation of the CDKN1B ternary complex. Inhibited by INK4 family members. In resting cells, the non-tyrosine-phosphorylated form of CDKN1B prevents phosphorylation at Thr-172 and inactivation, while, in proliferating cells, tyrosine phosphorylation of CDKN1B allows phosphorylation of Thr-172 of CDK4 and subsequent activation. Its function is as follows. Ser/Thr-kinase component of cyclin D-CDK4 (DC) complexes that phosphorylate and inhibit members of the retinoblastoma (RB) protein family including RB1 and regulate the cell-cycle during G(1)/S transition. Phosphorylation of RB1 allows dissociation of the transcription factor E2F from the RB/E2F complexes and the subsequent transcription of E2F target genes which are responsible for the progression through the G(1) phase. Hypophosphorylates RB1 in early G(1) phase. Cyclin D-CDK4 complexes are major integrators of various mitogenenic and antimitogenic signals. Also phosphorylates SMAD3 in a cell-cycle-dependent manner and represses its transcriptional activity. Component of the ternary complex, cyclin D/CDK4/CDKN1B, required for nuclear translocation and activity of the cyclin D-CDK4 complex. This is Cyclin-dependent kinase 4 (Cdk4) from Rattus norvegicus (Rat).